Reading from the N-terminus, the 837-residue chain is Tuftelin-interacting protein 11 (837 aa).

Composition is skewed to basic and acidic residues over residues 1-13 (MSLSHLYRDGEGR) and 50-64 (TYGVWAEHDSDDERP). Disordered regions lie at residues 1–21 (MSLSHLYRDGEGRVDDDDDER) and 50–136 (TYGV…AGGT). Residues 1 to 50 (MSLSHLYRDGEGRVDDDDDERENFEITDWDLQNEFNPNRQRHWQTKEEAT) are required for interaction with DHX15. Phosphoserine occurs at positions 2, 59, and 98. The span at 91 to 102 (EEAELDDSEDEE) shows a compositional bias: acidic residues. Over residues 103 to 116 (KPGKQEELPKDLGP) the composition is skewed to basic and acidic residues. Ser-144 bears the Phosphoserine mark. The 47-residue stretch at 149-195 (TKGIGQKLLQKMGYVPGRGLGKNAQGIINPIEAKQRKGKGAVGAYGS) folds into the G-patch domain. Residues 183–236 (QRKGKGAVGAYGSERTTQSLQDFPVVDSEEEAEEEFQKELSQWRKDPSGSKKKP) are disordered. Position 210 is a phosphoserine (Ser-210). The span at 217–231 (EFQKELSQWRKDPSG) shows a compositional bias: basic and acidic residues. The short motif at 700-705 (VKDKFN) is the Nuclear localization signal element. Residues 710–734 (IMNRAVSSNVGAYMQPGARENIAYL) are required for nuclear speckle localization.

Belongs to the TFP11/STIP family. Identified in the spliceosome C complex. Found in the Intron Large (IL) complex, a post-mRNA release spliceosomal complex containing the excised intron, U2, U5 and U6 snRNPs, and splicing factors. Interacts with TUFT1. Interacts with DHX15; indicative for a recruitment of DHX15 to the IL complex. Interacts with GCFC2.

Its subcellular location is the cytoplasm. The protein localises to the nucleus. Its function is as follows. Involved in pre-mRNA splicing, specifically in spliceosome disassembly during late-stage splicing events. Intron turnover seems to proceed through reactions in two lariat-intron associated complexes termed Intron Large (IL) and Intron Small (IS). In cooperation with DHX15 seems to mediate the transition of the U2, U5 and U6 snRNP-containing IL complex to the snRNP-free IS complex leading to efficient debranching and turnover of excised introns. May play a role in the differentiation of ameloblasts and odontoblasts or in the forming of the enamel extracellular matrix. This chain is Tuftelin-interacting protein 11 (TFIP11), found in Oryctolagus cuniculus (Rabbit).